Here is a 358-residue protein sequence, read N- to C-terminus: Gibberellin 2-beta-dioxygenase 6 (358 aa).

Positions 207 to 308 constitute a Fe2OG dioxygenase domain; sequence DETTCFLRLN…RLSVAYFLCP (102 aa). 2-oxoglutarate is bound at residue tyrosine 218. Positions 233, 235, and 289 each coordinate Fe cation. Residues arginine 299 and serine 301 each coordinate 2-oxoglutarate.

The protein belongs to the iron/ascorbate-dependent oxidoreductase family. GA2OX subfamily. The cofactor is L-ascorbate. It depends on Fe(2+) as a cofactor. In terms of tissue distribution, expressed in panicles. Expressed at low levels in young shoots, leaf blades and elongating internodes.

The protein localises to the cytoplasm. It is found in the nucleus. It carries out the reaction gibberellin A1 + 2-oxoglutarate + O2 = gibberellin A8 + succinate + CO2. Catalyzes the 2-beta-hydroxylation of several biologically active gibberellins, leading to the homeostatic regulation of their endogenous level. Catabolism of gibberellins (GAs) plays a central role in plant development. In vitro, converts GA12 and GA53 to the corresponding 2-beta-hydroxylated products GA110 and GA97, respectively. In Oryza sativa subsp. japonica (Rice), this protein is Gibberellin 2-beta-dioxygenase 6.